A 965-amino-acid chain; its full sequence is Glycine dehydrogenase (decarboxylating) (965 aa).

Lys711 bears the N6-(pyridoxal phosphate)lysine mark.

It belongs to the GcvP family. In terms of assembly, the glycine cleavage system is composed of four proteins: P, T, L and H. Pyridoxal 5'-phosphate serves as cofactor.

The enzyme catalyses N(6)-[(R)-lipoyl]-L-lysyl-[glycine-cleavage complex H protein] + glycine + H(+) = N(6)-[(R)-S(8)-aminomethyldihydrolipoyl]-L-lysyl-[glycine-cleavage complex H protein] + CO2. The glycine cleavage system catalyzes the degradation of glycine. The P protein binds the alpha-amino group of glycine through its pyridoxal phosphate cofactor; CO(2) is released and the remaining methylamine moiety is then transferred to the lipoamide cofactor of the H protein. This is Glycine dehydrogenase (decarboxylating) from Psychrobacter arcticus (strain DSM 17307 / VKM B-2377 / 273-4).